Consider the following 666-residue polypeptide: MGKTKTRGRRHQDKQRKDEFEPSSNSAKEHIQQEESTYNDEAEIKETQPQMFFGVLDREELEYFKQAESTLQLDAFEAPEEKFQFVTSIIEEAKGKELKLVTSQITSKLMERVILECDETQLKDIFQSFNGVFFGLSCHKYASHVLETLFVRSAALVERELLTPSFDNNEKEGPYVTMENMFLFMLNELKPHLKTMMNHQYASHVLRLLILILSSKTLPNSTKANSTLRSKKSKIARKMIDIKDNDDFNKVYQTPESFKSELRDIITTLYKGFTNGAESRSDISQSTITKFREYSVDKVASPVIQLIIQVEGIFDRDRSFWRLVFNTADEKDPKEESFLEYLLSDPVGSHFLENVIGSARLKYVERLYRLYMKDRIVKLAKRDTTGAFVVRALLEHLKEKDVKQILDAVVPELSMLLNSNMDFGTAIINASNKQGGYLRDDVIAQLIQKYYPEKSDAKNILESCLLLSASTLGNTRDDWPTAEERRRSVFLEQLIDYDDKFLNITIDSMLALPEERLIQMCYHGVFSHVVEHVLQTTRVDIIKRKMLLNILSKESVNLACNVYGSHIMDKLWEFTAKLTLYKERIARALVLETEKVKNSIYGRQVWKNWKLELYVRKMWDWKKLIKEQEFEIFPNSKPLQPKPEKHSRERNNSKEGSAFKKQKHYR.

The segment covering 1–14 (MGKTKTRGRRHQDK) has biased composition (basic residues). Residues 1–40 (MGKTKTRGRRHQDKQRKDEFEPSSNSAKEHIQQEESTYND) form a disordered region. Pumilio repeat units lie at residues 92 to 127 (EAKG…DIFQ), 128 to 163 (SFNG…ELLT), 188 to 223 (ELKP…NSTK), 286 to 326 (STIT…LVFN), 334 to 369 (KEES…RLYR), 370 to 407 (LYMK…QILD), 511 to 548 (ALPE…KMLL), and 549 to 587 (NILS…RIAR). A disordered region spans residues 635 to 666 (NSKPLQPKPEKHSRERNNSKEGSAFKKQKHYR). Positions 642-653 (KPEKHSRERNNS) are enriched in basic and acidic residues.

The protein belongs to the NOP9 family. As to quaternary structure, component of the 90S pre-ribosome. Component of the pre-40S ribosome.

It is found in the nucleus. Its subcellular location is the nucleolus. Functionally, RNA-binding nucleolar protein required for pre-rRNA processing. Component of the 90S pre-ribosome involved in production of 18S rRNA and assembly of small ribosomal subunit. Component of the pre-40S ribosome required for release from the nucleolus. The protein is Nucleolar protein 9 (NOP9) of Saccharomyces cerevisiae (strain JAY291) (Baker's yeast).